Here is a 607-residue protein sequence, read N- to C-terminus: DNA polymerase (607 aa).

A 3'-5' exonuclease domain is found at 1 to 213 (MIELRHEVQG…CSALAPLVPD (213 aa)). Positions 214–607 (VSRPLVPYEH…SWGSLYGADY (394 aa)) are polymerase.

The protein belongs to the DNA polymerase type-A family.

The catalysed reaction is DNA(n) + a 2'-deoxyribonucleoside 5'-triphosphate = DNA(n+1) + diphosphate. Replicates viral genomic DNA. This polymerase possesses two enzymatic activities: DNA synthesis (polymerase) and an exonucleolytic activity that degrades single-stranded DNA in the 3'-5' direction. In Mycobacterium phage D29 (Mycobacteriophage D29), this protein is DNA polymerase (44).